The following is a 130-amino-acid chain: Snaclec B8 (130 aa).

Cystine bridges form between Cys2-Cys13, Cys30-Cys124, and Cys99-Cys116. The C-type lectin domain maps to 9-125 (HEGHCYKVFK…CELAYHFICM (117 aa)).

The protein belongs to the snaclec family. As to quaternary structure, heterodimer; disulfide-linked. Expressed by the venom gland.

The protein resides in the secreted. In terms of biological role, interferes with one step of hemostasis (modulation of platelet aggregation, or coagulation cascade, for example). This Macrovipera lebetinus (Levantine viper) protein is Snaclec B8.